Here is a 1044-residue protein sequence, read N- to C-terminus: Isoleucine--tRNA ligase (1044 aa).

The 'HIGH' region motif lies at 48 to 58 (PFATGLPHFGH). Residues 594–598 (KMSKS) carry the 'KMSKS' region motif. Position 597 (K597) interacts with ATP.

Belongs to the class-I aminoacyl-tRNA synthetase family. IleS type 2 subfamily. As to quaternary structure, monomer. It depends on Zn(2+) as a cofactor.

It is found in the cytoplasm. The catalysed reaction is tRNA(Ile) + L-isoleucine + ATP = L-isoleucyl-tRNA(Ile) + AMP + diphosphate. In terms of biological role, catalyzes the attachment of isoleucine to tRNA(Ile). As IleRS can inadvertently accommodate and process structurally similar amino acids such as valine, to avoid such errors it has two additional distinct tRNA(Ile)-dependent editing activities. One activity is designated as 'pretransfer' editing and involves the hydrolysis of activated Val-AMP. The other activity is designated 'posttransfer' editing and involves deacylation of mischarged Val-tRNA(Ile). The protein is Isoleucine--tRNA ligase of Borrelia turicatae (strain 91E135).